The following is a 167-amino-acid chain: Lipoprotein signal peptidase (167 aa).

Helical transmembrane passes span 67–87 (WILVALTLFAILLLSIWLWRA) and 91–111 (LVALALGCIIGGALGNAIDRI). Catalysis depends on residues D118 and D136. A helical membrane pass occupies residues 127 to 147 (FSWYVFNLADAAIVAGVALLI).

The protein belongs to the peptidase A8 family.

It localises to the cell inner membrane. It catalyses the reaction Release of signal peptides from bacterial membrane prolipoproteins. Hydrolyzes -Xaa-Yaa-Zaa-|-(S,diacylglyceryl)Cys-, in which Xaa is hydrophobic (preferably Leu), and Yaa (Ala or Ser) and Zaa (Gly or Ala) have small, neutral side chains.. It functions in the pathway protein modification; lipoprotein biosynthesis (signal peptide cleavage). This protein specifically catalyzes the removal of signal peptides from prolipoproteins. This chain is Lipoprotein signal peptidase, found in Beijerinckia indica subsp. indica (strain ATCC 9039 / DSM 1715 / NCIMB 8712).